Reading from the N-terminus, the 446-residue chain is 3-phosphoshikimate 1-carboxyvinyltransferase (446 aa).

3-phosphoshikimate is bound by residues Lys-30, Ser-31, and Arg-35. Lys-30 is a phosphoenolpyruvate binding site. Residues Gly-112 and Arg-140 each contribute to the phosphoenolpyruvate site. Positions 186, 187, 188, 215, 334, and 361 each coordinate 3-phosphoshikimate. Gln-188 is a phosphoenolpyruvate binding site. Glu-334 acts as the Proton acceptor in catalysis. Phosphoenolpyruvate is bound by residues Arg-365, Arg-406, and Lys-431.

The protein belongs to the EPSP synthase family. Monomer.

It is found in the cytoplasm. The enzyme catalyses 3-phosphoshikimate + phosphoenolpyruvate = 5-O-(1-carboxyvinyl)-3-phosphoshikimate + phosphate. The protein operates within metabolic intermediate biosynthesis; chorismate biosynthesis; chorismate from D-erythrose 4-phosphate and phosphoenolpyruvate: step 6/7. Catalyzes the transfer of the enolpyruvyl moiety of phosphoenolpyruvate (PEP) to the 5-hydroxyl of shikimate-3-phosphate (S3P) to produce enolpyruvyl shikimate-3-phosphate and inorganic phosphate. The sequence is that of 3-phosphoshikimate 1-carboxyvinyltransferase from Streptomyces avermitilis (strain ATCC 31267 / DSM 46492 / JCM 5070 / NBRC 14893 / NCIMB 12804 / NRRL 8165 / MA-4680).